The chain runs to 260 residues: Methylthioribulose-1-phosphate dehydratase (260 aa).

The disordered stretch occupies residues 1 to 26 (MTPPTTGLPAENTTDDNDHLVQSDDP). Basic and acidic residues predominate over residues 16 to 26 (DNDHLVQSDDP). Position 109 (Cys-109) interacts with substrate. Residues His-127 and His-129 each contribute to the Zn(2+) site. The active-site Proton donor/acceptor is Glu-154. Residue His-211 coordinates Zn(2+).

Belongs to the aldolase class II family. MtnB subfamily. Requires Zn(2+) as cofactor.

It is found in the cytoplasm. The catalysed reaction is 5-(methylsulfanyl)-D-ribulose 1-phosphate = 5-methylsulfanyl-2,3-dioxopentyl phosphate + H2O. The protein operates within amino-acid biosynthesis; L-methionine biosynthesis via salvage pathway; L-methionine from S-methyl-5-thio-alpha-D-ribose 1-phosphate: step 2/6. In terms of biological role, catalyzes the dehydration of methylthioribulose-1-phosphate (MTRu-1-P) into 2,3-diketo-5-methylthiopentyl-1-phosphate (DK-MTP-1-P). The polypeptide is Methylthioribulose-1-phosphate dehydratase (Podospora anserina (strain S / ATCC MYA-4624 / DSM 980 / FGSC 10383) (Pleurage anserina)).